We begin with the raw amino-acid sequence, 622 residues long: 1,4-alpha-glucan branching enzyme GlgB (622 aa).

Asp-300 acts as the Nucleophile in catalysis. Glu-351 acts as the Proton donor in catalysis.

The protein belongs to the glycosyl hydrolase 13 family. GlgB subfamily. As to quaternary structure, monomer.

The enzyme catalyses Transfers a segment of a (1-&gt;4)-alpha-D-glucan chain to a primary hydroxy group in a similar glucan chain.. It participates in glycan biosynthesis; glycogen biosynthesis. In terms of biological role, catalyzes the formation of the alpha-1,6-glucosidic linkages in glycogen by scission of a 1,4-alpha-linked oligosaccharide from growing alpha-1,4-glucan chains and the subsequent attachment of the oligosaccharide to the alpha-1,6 position. This is 1,4-alpha-glucan branching enzyme GlgB from Streptococcus agalactiae serotype III (strain NEM316).